Reading from the N-terminus, the 131-residue chain is MFDGIGFMELLLIGIVGLVVLGPERLPTAVRSVSSWIRAMKKMANSVKDELEQELKIEQLHSDLKNAESQGLKNLSPELQDSINQLKEAAQSVNRPYQVEDVPAAKDVPAKEMPTSETSTATNANSDKPNG.

A helical membrane pass occupies residues 2 to 22; the sequence is FDGIGFMELLLIGIVGLVVLG. Polar residues predominate over residues 86 to 95; sequence LKEAAQSVNR. The tract at residues 86 to 131 is disordered; that stretch reads LKEAAQSVNRPYQVEDVPAAKDVPAKEMPTSETSTATNANSDKPNG. The segment covering 115–131 has biased composition (low complexity); the sequence is TSETSTATNANSDKPNG.

This sequence belongs to the TatB family. As to quaternary structure, the Tat system comprises two distinct complexes: a TatABC complex, containing multiple copies of TatA, TatB and TatC subunits, and a separate TatA complex, containing only TatA subunits. Substrates initially bind to the TatABC complex, which probably triggers association of the separate TatA complex to form the active translocon.

It is found in the cell inner membrane. In terms of biological role, part of the twin-arginine translocation (Tat) system that transports large folded proteins containing a characteristic twin-arginine motif in their signal peptide across membranes. Together with TatC, TatB is part of a receptor directly interacting with Tat signal peptides. TatB may form an oligomeric binding site that transiently accommodates folded Tat precursor proteins before their translocation. In Shewanella halifaxensis (strain HAW-EB4), this protein is Sec-independent protein translocase protein TatB.